The following is a 168-amino-acid chain: Large ribosomal subunit protein uL10 (168 aa).

It belongs to the universal ribosomal protein uL10 family. Part of the ribosomal stalk of the 50S ribosomal subunit. The N-terminus interacts with L11 and the large rRNA to form the base of the stalk. The C-terminus forms an elongated spine to which L12 dimers bind in a sequential fashion forming a multimeric L10(L12)X complex.

In terms of biological role, forms part of the ribosomal stalk, playing a central role in the interaction of the ribosome with GTP-bound translation factors. This Acinetobacter baumannii (strain AB307-0294) protein is Large ribosomal subunit protein uL10.